Here is a 124-residue protein sequence, read N- to C-terminus: Ribonuclease pancreatic (124 aa).

Basic and acidic residues predominate over residues 1–13 (KESAAAKFERQHM). A disordered region spans residues 1–25 (KESAAAKFERQHMDPSPSSASSSNY). Residues Lys-7 and Arg-10 each coordinate substrate. His-12 (proton acceptor) is an active-site residue. Cystine bridges form between Cys-26-Cys-84, Cys-40-Cys-95, Cys-58-Cys-110, and Cys-65-Cys-72. A glycan (N-linked (GlcNAc...) asparagine; partial) is linked at Asn-34. Substrate contacts are provided by residues 41 to 45 (KPVNT), Lys-66, and Arg-85. His-119 acts as the Proton donor in catalysis.

Belongs to the pancreatic ribonuclease family. Monomer. Interacts with and forms tight 1:1 complexes with RNH1. Dimerization of two such complexes may occur. Interaction with RNH1 inhibits this protein. As to expression, pancreas.

It localises to the secreted. It carries out the reaction an [RNA] containing cytidine + H2O = an [RNA]-3'-cytidine-3'-phosphate + a 5'-hydroxy-ribonucleotide-3'-[RNA].. The catalysed reaction is an [RNA] containing uridine + H2O = an [RNA]-3'-uridine-3'-phosphate + a 5'-hydroxy-ribonucleotide-3'-[RNA].. In terms of biological role, endonuclease that catalyzes the cleavage of RNA on the 3' side of pyrimidine nucleotides. Acts on single-stranded and double-stranded RNA. The protein is Ribonuclease pancreatic (RNASE1) of Capreolus capreolus (European roe deer).